The chain runs to 122 residues: Large ribosomal subunit protein uL14 (122 aa).

The protein belongs to the universal ribosomal protein uL14 family. In terms of assembly, part of the 50S ribosomal subunit. Forms a cluster with proteins L3 and L19. In the 70S ribosome, L14 and L19 interact and together make contacts with the 16S rRNA in bridges B5 and B8.

Functionally, binds to 23S rRNA. Forms part of two intersubunit bridges in the 70S ribosome. The polypeptide is Large ribosomal subunit protein uL14 (Buchnera aphidicola subsp. Schizaphis graminum (strain Sg)).